A 445-amino-acid polypeptide reads, in one-letter code: Elongation factor 1-alpha (445 aa).

The tr-type G domain maps to 5 to 230 (KVHISLVVIG…DNLEPPKRPS (226 aa)). Positions 14 to 21 (GHVDSGKS) are G1. GTP is bound at residue 14–21 (GHVDSGKS). An N6,N6-dimethyllysine modification is found at lysine 55. A G2 region spans residues 70–74 (CITID). Position 79 is an N6,N6,N6-trimethyllysine (lysine 79). The interval 91–94 (DAPG) is G3. GTP-binding positions include 91–95 (DAPGH) and 153–156 (NKFD). The tract at residues 153-156 (NKFD) is G4. Lysine 187 bears the N6,N6,N6-trimethyllysine mark. The G5 stretch occupies residues 194–196 (SGW). Residue lysine 261 is modified to N6-methyllysine. Residues lysine 306 and lysine 396 each carry the N6,N6,N6-trimethyllysine modification.

This sequence belongs to the TRAFAC class translation factor GTPase superfamily. Classic translation factor GTPase family. EF-Tu/EF-1A subfamily.

The protein localises to the cytoplasm. This protein promotes the GTP-dependent binding of aminoacyl-tRNA to the A-site of ribosomes during protein biosynthesis. The chain is Elongation factor 1-alpha (TEF) from Euglena gracilis.